A 139-amino-acid chain; its full sequence is Putative pre-16S rRNA nuclease (139 aa).

It belongs to the YqgF nuclease family.

The protein localises to the cytoplasm. Functionally, could be a nuclease involved in processing of the 5'-end of pre-16S rRNA. The sequence is that of Putative pre-16S rRNA nuclease from Pectobacterium carotovorum subsp. carotovorum (strain PC1).